The sequence spans 418 residues: Metacaspase-2 (418 aa).

Residues 68-113 (PSPYTHAPHAPSPFNHAPPDSYPFTHAPPASSPFNHAPPGPPPPVH) are disordered. Low complexity predominate over residues 70 to 80 (PYTHAPHAPSP). Over residues 103 to 112 (HAPPGPPPPV) the composition is skewed to pro residues. Active-site residues include histidine 200 and cysteine 256. Residues 385–406 (PDEEEEVNQAPQKTQEPQLSAN) form a disordered region. The span at 393–405 (QAPQKTQEPQLSA) shows a compositional bias: polar residues.

It belongs to the peptidase C14B family.

Acts as a negative regulator of oxidative stress cell death and hypersensitive cell death response mediated by immune response. Acts via indirect or direct regulation of AMC1 at postranscriptional level. The sequence is that of Metacaspase-2 (AMC2) from Arabidopsis thaliana (Mouse-ear cress).